The sequence spans 227 residues: Protein FAM3C (227 aa).

The N-terminal stretch at 1-30 is a signal peptide; it reads MMRAGGLLKLGVLVSVLFVAVFLAFELLES. 2 disulfides stabilise this stretch: Cys58/Cys86 and Cys64/Cys221. One can recognise a GG-type lectin domain in the interval 67-225; the sequence is DHFAFKITSG…LEMEGCIPIK (159 aa).

It belongs to the FAM3 family.

The protein resides in the secreted. In terms of biological role, involved in retinal laminar formation. This chain is Protein FAM3C (fam3c), found in Danio rerio (Zebrafish).